The primary structure comprises 620 residues: Cilia- and flagella-associated protein 52 (620 aa).

11 WD repeats span residues 62-106 (GHGN…LLAR), 109-150 (LHKG…AICG), 156-195 (LNVG…RKIW), 288-327 (QLQG…ETLI), 330-369 (CHFD…ELLR), 372-411 (VPNM…LMYV), 415-454 (AHRI…QKLE), 459-498 (EHKS…RNQM), 500-539 (LANT…VIRE), 543-582 (SLSG…VTHV), and 585-620 (GHSG…PYTS).

Belongs to the CFAP52 family. Microtubule inner protein component of sperm flagellar doublet microtubules. Interacts with BRCA2. Interacts with the CCT chaperonin complex. Interacts with HSP70. Interacts with AK8. Interacts with CFAP45. Interacts with DNAI1. Interacts with IQDC. Expressed in respiratory cells and sperm (at protein level). Highly expressed in testis. Up-regulated in hepatocellular carcinoma (HCC).

The protein resides in the cytoplasm. It localises to the cytoskeleton. It is found in the cilium axoneme. Its subcellular location is the flagellum axoneme. In terms of biological role, microtubule inner protein (MIP) part of the dynein-decorated doublet microtubules (DMTs) in cilia axoneme. Important for proper ciliary and flagellar beating. May act in cooperation with CFAP45 and axonemal dynein subunit DNAH11. May play a role in cell growth and/or survival. This chain is Cilia- and flagella-associated protein 52, found in Homo sapiens (Human).